The sequence spans 766 residues: Dolichyl pyrophosphate Glc1Man9GlcNAc2 alpha-1,3-glucosyltransferase (766 aa).

12 helical membrane-spanning segments follow: residues 6-26 (LVLA…PAYV), 60-80 (YPPF…FFGF), 96-116 (ILIF…AVCA), 156-176 (SIHF…LFFI), 190-210 (ILLN…FYYL), 228-248 (AISL…PFIH), 324-344 (PMGT…GLVI), 350-370 (ADFS…GYHV), 395-415 (ILIH…FTPF), 423-443 (ICVS…LMPL), 452-472 (VASW…HKWL), and 482-502 (LMAI…ALIW).

It belongs to the ALG6/ALG8 glucosyltransferase family.

It is found in the endoplasmic reticulum membrane. It carries out the reaction an alpha-D-Glc-(1-&gt;3)-alpha-D-Man-(1-&gt;2)-alpha-D-Man-(1-&gt;2)-alpha-D-Man-(1-&gt;3)-[alpha-D-Man-(1-&gt;2)-alpha-D-Man-(1-&gt;3)-[alpha-D-Man-(1-&gt;2)-alpha-D-Man-(1-&gt;6)]-alpha-D-Man-(1-&gt;6)]-beta-D-Man-(1-&gt;4)-beta-D-GlcNAc-(1-&gt;4)-alpha-D-GlcNAc-diphospho-di-trans,poly-cis-dolichol + a di-trans,poly-cis-dolichyl beta-D-glucosyl phosphate = an alpha-D-Glc-(1-&gt;3)-alpha-D-Glc-(1-&gt;3)-alpha-D-Man-(1-&gt;2)-alpha-D-Man-(1-&gt;2)-alpha-D-Man-(1-&gt;3)-[alpha-D-Man-(1-&gt;2)-alpha-D-Man-(1-&gt;3)-[alpha-D-Man-(1-&gt;2)-alpha-D-Man-(1-&gt;6)]-alpha-D-Man-(1-&gt;6)]-beta-D-Man-(1-&gt;4)-beta-D-GlcNAc-(1-&gt;4)-alpha-D-GlcNAc-diphospho-di-trans,poly-cis-dolichol + a di-trans,poly-cis-dolichyl phosphate + H(+). It functions in the pathway protein modification; protein glycosylation. Functionally, dolichyl pyrophosphate Glc1Man9GlcNAc2 alpha-1,3-glucosyltransferase that operates in the biosynthetic pathway of dolichol-linked oligosaccharides, the glycan precursors employed in protein asparagine (N)-glycosylation. The assembly of dolichol-linked oligosaccharides begins on the cytosolic side of the endoplasmic reticulum membrane and finishes in its lumen. The sequential addition of sugars to dolichol pyrophosphate produces dolichol-linked oligosaccharides containing fourteen sugars, including two GlcNAcs, nine mannoses and three glucoses. Once assembled, the oligosaccharide is transferred from the lipid to nascent proteins by oligosaccharyltransferases. In the lumen of the endoplasmic reticulum, adds the second glucose residue from dolichyl phosphate glucose (Dol-P-Glc) onto the lipid-linked oligosaccharide intermediate Glc(1)Man(9)GlcNAc(2)-PP-Dol to produce Glc(2)Man(9)GlcNAc(2)-PP-Dol. The polypeptide is Dolichyl pyrophosphate Glc1Man9GlcNAc2 alpha-1,3-glucosyltransferase (Caenorhabditis elegans).